Consider the following 271-residue polypeptide: Mannosyl-3-phosphoglycerate phosphatase (271 aa).

D13 acts as the Nucleophile in catalysis. Residues D13, D15, and D214 each coordinate Mg(2+).

It belongs to the HAD-like hydrolase superfamily. MPGP family. It depends on Mg(2+) as a cofactor.

It localises to the cytoplasm. It catalyses the reaction 2-O-(alpha-D-mannosyl)-3-phosphoglycerate + H2O = (2R)-2-O-(alpha-D-mannosyl)-glycerate + phosphate. In Shigella boydii serotype 4 (strain Sb227), this protein is Mannosyl-3-phosphoglycerate phosphatase (yedP).